A 121-amino-acid polypeptide reads, in one-letter code: Nitrogenase-stabilizing/protective protein NifW (121 aa).

The protein belongs to the NifW family. Homotrimer; associates with NifD.

Functionally, may protect the nitrogenase Fe-Mo protein from oxidative damage. The sequence is that of Nitrogenase-stabilizing/protective protein NifW from Leptothrix cholodnii (strain ATCC 51168 / LMG 8142 / SP-6) (Leptothrix discophora (strain SP-6)).